Consider the following 343-residue polypeptide: Ribosomal RNA small subunit methyltransferase C (343 aa).

It belongs to the methyltransferase superfamily. RsmC family. In terms of assembly, monomer.

Its subcellular location is the cytoplasm. It carries out the reaction guanosine(1207) in 16S rRNA + S-adenosyl-L-methionine = N(2)-methylguanosine(1207) in 16S rRNA + S-adenosyl-L-homocysteine + H(+). Specifically methylates the guanine in position 1207 of 16S rRNA in the 30S particle. This is Ribosomal RNA small subunit methyltransferase C from Escherichia fergusonii (strain ATCC 35469 / DSM 13698 / CCUG 18766 / IAM 14443 / JCM 21226 / LMG 7866 / NBRC 102419 / NCTC 12128 / CDC 0568-73).